The sequence spans 77 residues: MKTSVLLVILGIAAITVQCTASESVKQDSLRTFVDAVLGWNAEMASEARCGGWMAKCADSDDCCETFHCTRFNVCGK.

The first 21 residues, 1-21, serve as a signal peptide directing secretion; the sequence is MKTSVLLVILGIAAITVQCTA. Residues 22-49 constitute a propeptide that is removed on maturation; that stretch reads SESVKQDSLRTFVDAVLGWNAEMASEAR. Disulfide bonds link Cys50/Cys64, Cys57/Cys69, and Cys63/Cys75. Lys77 is modified (lysine amide).

This sequence belongs to the neurotoxin 10 (Hwtx-1) family. 65 (Jztx-21) subfamily. Expressed by the venom gland.

It is found in the secreted. Its function is as follows. Probable ion channel inhibitor. This chain is U14-theraphotoxin-Cg1a 2, found in Chilobrachys guangxiensis (Chinese earth tiger tarantula).